Consider the following 259-residue polypeptide: Protein odd-skipped-related 1 (259 aa).

C2H2-type zinc fingers lie at residues 168 to 190, 196 to 218, and 224 to 246; these read FVCK…ERTH, YTCD…RYIH, and FKCQ…KTLH.

This sequence belongs to the Odd C2H2-type zinc-finger protein family. As to expression, at early gastrula stage, expressed in the involuting mesoderm and endoderm. During neurulation, expressed in the pronephric primordium, following expression of osr2. During tailbud (stage 35), expressed in the rectal diverticulum and in the kidney ducts.

The protein resides in the nucleus. In terms of biological role, transcriptional repressor. Required for pronephric kidney development. This Xenopus laevis (African clawed frog) protein is Protein odd-skipped-related 1.